A 72-amino-acid polypeptide reads, in one-letter code: VKRPMNAFMVWSQIERRKIMEQSPDMHNAEISKRLGKRWKLLKDSDKIPFIREAERLRLKHMADYPDYKYRP.

A DNA-binding region (HMG box) is located at residues 1 to 69 (VKRPMNAFMV…KHMADYPDYK (69 aa)).

The protein resides in the nucleus. The chain is SRY-related protein AES4 from Alligator mississippiensis (American alligator).